We begin with the raw amino-acid sequence, 615 residues long: 9-cis-epoxycarotenoid dioxygenase NCED1, chloroplastic (615 aa).

Residues 1–41 (MPSPASNTWINTTLPSSCSSPFKDLASTSSSPTTLLPFKKR) constitute a chloroplast transit peptide. 2 disordered regions span residues 20 to 45 (SPFK…SSSN) and 62 to 101 (YQPT…KQPF). Composition is skewed to low complexity over residues 27–37 (STSSSPTTLLP) and 64–86 (PTST…TTTT). H316, H365, and H430 together coordinate Fe cation. Positions 571–592 (KEWKSELQIVNAQNLKLEASIK) form a coiled coil. H602 lines the Fe cation pocket.

It belongs to the carotenoid oxygenase family. It depends on Fe(2+) as a cofactor.

The protein resides in the plastid. It is found in the chloroplast thylakoid membrane. It carries out the reaction a 9-cis-epoxycarotenoid + O2 = a 12'-apo-carotenal + 2-cis,4-trans-xanthoxin. The enzyme catalyses 9-cis-violaxanthin + O2 = (3S,5R,6S)-5,6-epoxy-3-hydroxy-5,6-dihydro-12'-apo-beta-caroten-12'-al + 2-cis,4-trans-xanthoxin. It catalyses the reaction 9'-cis-neoxanthin + O2 = (3S,5R,6R)-3,5-dihydroxy-6,7-didehydro-5,6-dihydro-12'-apo-beta-caroten-12'-al + 2-cis,4-trans-xanthoxin. In terms of biological role, has a 11,12(11',12') 9-cis epoxycarotenoid cleavage activity. Catalyzes the first step of abscisic-acid biosynthesis from carotenoids, in response to water stress. Active on 9-cis-violaxanthin and 9'-cis-neoxanthin, but not on the all-trans isomers of violaxanthin and neoxanthin. The polypeptide is 9-cis-epoxycarotenoid dioxygenase NCED1, chloroplastic (NCED1) (Phaseolus vulgaris (Kidney bean)).